A 738-amino-acid polypeptide reads, in one-letter code: Phosphoribosylformylglycinamidine synthase subunit PurL (738 aa).

His41 is an active-site residue. 2 residues coordinate ATP: Tyr44 and Lys83. Residue Glu85 coordinates Mg(2+). Residues 86–89 and Arg108 each bind substrate; that span reads SHNH. Residue His87 is the Proton acceptor of the active site. Mg(2+) is bound at residue Asp109. Gln233 provides a ligand contact to substrate. Mg(2+) is bound at residue Asp261. Residue 305 to 307 coordinates substrate; that stretch reads ESQ. Positions 490 and 527 each coordinate ATP. Residue Asn528 coordinates Mg(2+). Ser530 is a binding site for substrate.

It belongs to the FGAMS family. Monomer. Part of the FGAM synthase complex composed of 1 PurL, 1 PurQ and 2 PurS subunits.

It localises to the cytoplasm. The catalysed reaction is N(2)-formyl-N(1)-(5-phospho-beta-D-ribosyl)glycinamide + L-glutamine + ATP + H2O = 2-formamido-N(1)-(5-O-phospho-beta-D-ribosyl)acetamidine + L-glutamate + ADP + phosphate + H(+). Its pathway is purine metabolism; IMP biosynthesis via de novo pathway; 5-amino-1-(5-phospho-D-ribosyl)imidazole from N(2)-formyl-N(1)-(5-phospho-D-ribosyl)glycinamide: step 1/2. Functionally, part of the phosphoribosylformylglycinamidine synthase complex involved in the purines biosynthetic pathway. Catalyzes the ATP-dependent conversion of formylglycinamide ribonucleotide (FGAR) and glutamine to yield formylglycinamidine ribonucleotide (FGAM) and glutamate. The FGAM synthase complex is composed of three subunits. PurQ produces an ammonia molecule by converting glutamine to glutamate. PurL transfers the ammonia molecule to FGAR to form FGAM in an ATP-dependent manner. PurS interacts with PurQ and PurL and is thought to assist in the transfer of the ammonia molecule from PurQ to PurL. The polypeptide is Phosphoribosylformylglycinamidine synthase subunit PurL (Alkaliphilus metalliredigens (strain QYMF)).